The sequence spans 289 residues: Regulator of rDNA transcription protein 5 (289 aa).

The RRM domain maps to Thr-18–Pro-105. A disordered region spans residues Thr-235–Thr-289. Residues Asp-239–Val-255 are compositionally biased toward pro residues. Residues Ser-279 to Thr-289 are compositionally biased toward polar residues.

This sequence belongs to the RRT5 family.

In terms of biological role, may be involved in the modulation of rDNA transcription. The chain is Regulator of rDNA transcription protein 5 (RRT5) from Saccharomyces cerevisiae (strain RM11-1a) (Baker's yeast).